The sequence spans 162 residues: Universal stress protein MJ0577 (162 aa).

ATP is bound by residues P11, V41, 127-133 (GSHGKTN), and 141-143 (SVT).

Belongs to the universal stress protein A family. As to quaternary structure, homodimer. The cofactor is Mn(2+).

The protein resides in the cytoplasm. The sequence is that of Universal stress protein MJ0577 from Methanocaldococcus jannaschii (strain ATCC 43067 / DSM 2661 / JAL-1 / JCM 10045 / NBRC 100440) (Methanococcus jannaschii).